A 494-amino-acid polypeptide reads, in one-letter code: Acetyl-coenzyme A carboxylase carboxyl transferase subunit beta, chloroplastic (494 aa).

The 269-residue stretch at 226–494 (LWVQCENCYG…VPLNQNETEH (269 aa)) folds into the CoA carboxyltransferase N-terminal domain. Cys-230, Cys-233, Cys-249, and Cys-252 together coordinate Zn(2+). The C4-type zinc finger occupies 230–252 (CENCYGLNYKKFLKSKMNICEQC).

Belongs to the AccD/PCCB family. As to quaternary structure, acetyl-CoA carboxylase is a heterohexamer composed of biotin carboxyl carrier protein, biotin carboxylase and 2 subunits each of ACCase subunit alpha and ACCase plastid-coded subunit beta (accD). It depends on Zn(2+) as a cofactor.

Its subcellular location is the plastid. The protein resides in the chloroplast stroma. The catalysed reaction is N(6)-carboxybiotinyl-L-lysyl-[protein] + acetyl-CoA = N(6)-biotinyl-L-lysyl-[protein] + malonyl-CoA. Its pathway is lipid metabolism; malonyl-CoA biosynthesis; malonyl-CoA from acetyl-CoA: step 1/1. Functionally, component of the acetyl coenzyme A carboxylase (ACC) complex. Biotin carboxylase (BC) catalyzes the carboxylation of biotin on its carrier protein (BCCP) and then the CO(2) group is transferred by the transcarboxylase to acetyl-CoA to form malonyl-CoA. The sequence is that of Acetyl-coenzyme A carboxylase carboxyl transferase subunit beta, chloroplastic from Coffea arabica (Arabian coffee).